The following is a 353-amino-acid chain: UDP-N-acetylglucosamine--N-acetylmuramyl-(pentapeptide) pyrophosphoryl-undecaprenol N-acetylglucosamine transferase (353 aa).

Residues 10 to 12 (TGG), N124, S183, and Q283 contribute to the UDP-N-acetyl-alpha-D-glucosamine site.

It belongs to the glycosyltransferase 28 family. MurG subfamily.

It is found in the cell inner membrane. It catalyses the reaction di-trans,octa-cis-undecaprenyl diphospho-N-acetyl-alpha-D-muramoyl-L-alanyl-D-glutamyl-meso-2,6-diaminopimeloyl-D-alanyl-D-alanine + UDP-N-acetyl-alpha-D-glucosamine = di-trans,octa-cis-undecaprenyl diphospho-[N-acetyl-alpha-D-glucosaminyl-(1-&gt;4)]-N-acetyl-alpha-D-muramoyl-L-alanyl-D-glutamyl-meso-2,6-diaminopimeloyl-D-alanyl-D-alanine + UDP + H(+). It participates in cell wall biogenesis; peptidoglycan biosynthesis. In terms of biological role, cell wall formation. Catalyzes the transfer of a GlcNAc subunit on undecaprenyl-pyrophosphoryl-MurNAc-pentapeptide (lipid intermediate I) to form undecaprenyl-pyrophosphoryl-MurNAc-(pentapeptide)GlcNAc (lipid intermediate II). This is UDP-N-acetylglucosamine--N-acetylmuramyl-(pentapeptide) pyrophosphoryl-undecaprenol N-acetylglucosamine transferase from Helicobacter pylori (strain G27).